The primary structure comprises 177 residues: Large ribosomal subunit protein uL6 (177 aa).

Belongs to the universal ribosomal protein uL6 family. As to quaternary structure, part of the 50S ribosomal subunit.

In terms of biological role, this protein binds to the 23S rRNA, and is important in its secondary structure. It is located near the subunit interface in the base of the L7/L12 stalk, and near the tRNA binding site of the peptidyltransferase center. The protein is Large ribosomal subunit protein uL6 of Bordetella pertussis (strain Tohama I / ATCC BAA-589 / NCTC 13251).